The following is a 64-amino-acid chain: Copper-metallothionein (64 aa).

Residue serine 1 is modified to N-acetylserine. Cu(+) is bound by residues cysteine 7, cysteine 11, cysteine 16, cysteine 18, cysteine 22, cysteine 24, cysteine 28, cysteine 30, cysteine 33, cysteine 36, cysteine 38, cysteine 43, cysteine 45, cysteine 49, cysteine 55, cysteine 57, cysteine 61, and cysteine 63.

It belongs to the metallothionein superfamily. Type 2 family.

In terms of biological role, the metallothioneins are involved in the cellular sequestration of toxic metal ions and regulation of essential trace elements. This isoform binds exclusively copper. The protein is Copper-metallothionein of Helix pomatia (Roman snail).